A 235-amino-acid polypeptide reads, in one-letter code: Ribosomal RNA small subunit methyltransferase G (235 aa).

S-adenosyl-L-methionine is bound by residues Gly-98, Met-103, 149 to 150 (VE), and Arg-164.

It belongs to the methyltransferase superfamily. RNA methyltransferase RsmG family.

It is found in the cytoplasm. The enzyme catalyses guanosine(527) in 16S rRNA + S-adenosyl-L-methionine = N(7)-methylguanosine(527) in 16S rRNA + S-adenosyl-L-homocysteine. Its function is as follows. Specifically methylates the N7 position of guanine in position 527 of 16S rRNA. This chain is Ribosomal RNA small subunit methyltransferase G, found in Cupriavidus pinatubonensis (strain JMP 134 / LMG 1197) (Cupriavidus necator (strain JMP 134)).